The sequence spans 264 residues: Thymidylate synthase (264 aa).

DUMP contacts are provided by residues arginine 21 and 126–127 (RR). Cysteine 146 acts as the Nucleophile in catalysis. DUMP is bound by residues 166-169 (RSAD), asparagine 177, and 207-209 (HLY). Aspartate 169 is a (6R)-5,10-methylene-5,6,7,8-tetrahydrofolate binding site. Residue alanine 263 participates in (6R)-5,10-methylene-5,6,7,8-tetrahydrofolate binding.

It belongs to the thymidylate synthase family. Bacterial-type ThyA subfamily. Homodimer.

Its subcellular location is the cytoplasm. The enzyme catalyses dUMP + (6R)-5,10-methylene-5,6,7,8-tetrahydrofolate = 7,8-dihydrofolate + dTMP. It functions in the pathway pyrimidine metabolism; dTTP biosynthesis. Its function is as follows. Catalyzes the reductive methylation of 2'-deoxyuridine-5'-monophosphate (dUMP) to 2'-deoxythymidine-5'-monophosphate (dTMP) while utilizing 5,10-methylenetetrahydrofolate (mTHF) as the methyl donor and reductant in the reaction, yielding dihydrofolate (DHF) as a by-product. This enzymatic reaction provides an intracellular de novo source of dTMP, an essential precursor for DNA biosynthesis. The sequence is that of Thymidylate synthase from Afipia carboxidovorans (strain ATCC 49405 / DSM 1227 / KCTC 32145 / OM5) (Oligotropha carboxidovorans).